Reading from the N-terminus, the 123-residue chain is SPbeta prophage-derived uncharacterized protein YorE (123 aa).

This is SPbeta prophage-derived uncharacterized protein YorE (yorE) from Bacillus subtilis (strain 168).